Consider the following 385-residue polypeptide: Glucose-fructose oxidoreductase domain-containing protein 2 (385 aa).

Residues Met1–Ala25 form the signal peptide.

It belongs to the Gfo/Idh/MocA family.

It localises to the secreted. Its subcellular location is the extracellular space. The protein localises to the extracellular matrix. Functionally, promotes matrix assembly. This is Glucose-fructose oxidoreductase domain-containing protein 2 (Gfod2) from Mus musculus (Mouse).